The primary structure comprises 905 residues: Probable aromatic-L-amino-acid decarboxylase (905 aa).

The disordered stretch occupies residues 250–296 (YLNPIIKTPPHNERVPKMKTNISKTRKKKGKVSDASKDSRPSETKKE). Residues 280–296 (KVSDASKDSRPSETKKE) show a composition bias toward basic and acidic residues. Positions 492 and 591 each coordinate pyridoxal 5'-phosphate. Lys648 is modified (N6-(pyridoxal phosphate)lysine). Residues 861-905 (HTAEYADPPGKSNKSPQVAAKGELPSAAPPSSRTPNSDISEKSDR) are disordered. Positions 889–898 (PPSSRTPNSD) are enriched in polar residues.

The protein belongs to the group II decarboxylase family. As to quaternary structure, homodimer. Pyridoxal 5'-phosphate is required as a cofactor.

The enzyme catalyses L-dopa + H(+) = dopamine + CO2. The catalysed reaction is 5-hydroxy-L-tryptophan + H(+) = serotonin + CO2. It participates in catecholamine biosynthesis; dopamine biosynthesis; dopamine from L-tyrosine: step 2/2. Catalyzes the decarboxylation of L-3,4-dihydroxyphenylalanine (DOPA) to dopamine, L-5-hydroxytryptophan to serotonin and L-tryptophan to tryptamine. In Caenorhabditis elegans, this protein is Probable aromatic-L-amino-acid decarboxylase (hdl-1).